We begin with the raw amino-acid sequence, 485 residues long: Silicon efflux transporter LSI3 (485 aa).

The next 5 membrane-spanning stretches (helical) occupy residues 14-34 (VAFGVFWMLAVFPSVPFLPIG), 37-57 (AGALLGAVLMIVFHVISADDA), 59-79 (ASIDLPILGLLFATMVVGGYL), 106-126 (VCVVTALASALFTNDTCCVVL), and 180-200 (FLLGILPAMLAGMGINMLMLL). Residues 233–242 (ALNNNKKDDG) show a composition bias toward basic and acidic residues. The tract at residues 233–261 (ALNNNKKDDGDAATPASPEDDDGGDAESM) is disordered. 5 helical membrane passes run 283–303 (LFLKSFAYVVTVGMLVAYMLG), 336–356 (LLVFFSGMFVTVSGFNKTGLP), 377–397 (VLSVIILLLSNLASNVPTVLL), 418–438 (WLLLAWVSTVAGNLSLLGSAA), and 461–481 (HVIFGLPSTLVVTAIGIPLIG).

It belongs to the arsenite-antimonite (ArsB) efflux (TC 2.A.45) family.

The protein localises to the cell membrane. Silicon efflux transporter involved in silicon transport in shoots. In the nodes, involved with LSI2 and NIP2-2/LSI6 in silicon intervascular transfer, which is required for the preferential distribution of silicon, such as hyperaccumulation of silicon in the husk. Silicon is beneficial to plant growth and helps plants to overcome abiotic and biotic stresses by preventing lodging (falling over) and increasing resistance to pests and diseases, as well as other stresses. This is Silicon efflux transporter LSI3 from Oryza sativa subsp. japonica (Rice).